We begin with the raw amino-acid sequence, 491 residues long: Cobyric acid synthase (491 aa).

Residues 253-429 (AHRVAVVRLP…WHGSLEGDAL (177 aa)) form the GATase cobBQ-type domain. Catalysis depends on C334, which acts as the Nucleophile. Residue H421 is part of the active site.

Belongs to the CobB/CobQ family. CobQ subfamily.

Its pathway is cofactor biosynthesis; adenosylcobalamin biosynthesis. In terms of biological role, catalyzes amidations at positions B, D, E, and G on adenosylcobyrinic A,C-diamide. NH(2) groups are provided by glutamine, and one molecule of ATP is hydrogenolyzed for each amidation. The chain is Cobyric acid synthase from Mycobacterium marinum (strain ATCC BAA-535 / M).